Consider the following 110-residue polypeptide: UPF0060 membrane protein Haur_1798 (110 aa).

The next 4 helical transmembrane spans lie at 7–27 (VVLF…VWQW), 33–53 (SIWF…LPTL), 63–83 (VYAA…WLID), and 89–109 (QPSL…LYWP).

It belongs to the UPF0060 family.

The protein resides in the cell membrane. In Herpetosiphon aurantiacus (strain ATCC 23779 / DSM 785 / 114-95), this protein is UPF0060 membrane protein Haur_1798.